Here is a 520-residue protein sequence, read N- to C-terminus: Protein-export membrane protein SecD (520 aa).

Transmembrane regions (helical) follow at residues 10–30 (IILL…PTLA), 364–384 (DSLL…FLRY), 391–411 (LPMI…AAGI), 417–437 (LSVI…LVII), 461–481 (FWVI…LAIL), and 483–503 (LGDL…GVLI).

The protein belongs to the SecD/SecF family. SecD subfamily. In terms of assembly, part of the protein translocation apparatus. Forms a complex with SecF.

The protein localises to the cell membrane. Functionally, involved in protein export. In Haloquadratum walsbyi (strain DSM 16790 / HBSQ001), this protein is Protein-export membrane protein SecD.